We begin with the raw amino-acid sequence, 102 residues long: Putative UPF0320 protein YMR326C (102 aa).

It belongs to the UPF0320 family.

This Saccharomyces cerevisiae (strain ATCC 204508 / S288c) (Baker's yeast) protein is Putative UPF0320 protein YMR326C.